We begin with the raw amino-acid sequence, 676 residues long: MLRSTSDRFRWSSLSLAIACTLPLATQAADTTTTQTSSKKHSTDTMVVTATGNERSSFEAPMMVTVIEGNAPTSQTAATAADMLRQVPGLTVTGSGRTNGQDVVMRGYGKQGVLTLVDGVRQGTDTGHLNSTFLDPALVKRIEIVRGPAALLYGSGALGGVIAYETVDAADMLQPGQNSGYRVYSSAATGDHSFGLGASAFGRTDDLDGILSFGTRDIGNIRQSNGFNAPNDETISNVLAKGTWQIDSIQSLSANLRYYNNSAIEPKNPQTSAPSSTNVMTNRSTIQRDAQLRYNIKPLDQEWLNATAQVYYSEVEINARPQGSAEEGREQTTEGVKLENRTRLFIESPASHLLTYGTETYKQEQTPGGATESFPQAKIRFSSGWLQDEITLRDLPVSILAGTRYDNYSGSSDGYADVDADKWSSRGAISITPTDWLMLFGSYAQAFRAPTMGEMYNDSKHFAIPIRPGLTLTNYWVPNPNLKPETNETQEYGFGLRFSDLLMAEDDLQFKVSYFDTKAKDYISTRVDMQAMTTTSVNIDQAKIWGWDASMSYKTALFNWDLAYNRTRGKNQNTDEWLDTINPDTVTSIVDVPVANSGFSVGWIGTFANRSSRVSSSTPQAGYGVNDFYVSYKGQEAFKGMTTTMLLGNVFEKEYYTPQGIPQDGRNVKFFVSYQW.

The N-terminal stretch at 1 to 28 (MLRSTSDRFRWSSLSLAIACTLPLATQA) is a signal peptide. A TonB box motif is present at residues 44-51 (DTMVVTAT). The 112-residue stretch at 56–167 (SSFEAPMMVT…LGGVIAYETV (112 aa)) folds into the TBDR plug domain. A TBDR beta-barrel domain is found at 178 to 676 (NSGYRVYSSA…NVKFFVSYQW (499 aa)). The TonB C-terminal box motif lies at 659-676 (QGIPQDGRNVKFFVSYQW).

This sequence belongs to the TonB-dependent receptor family.

Its subcellular location is the cell outer membrane. Functionally, this protein is involved in the initial step of iron uptake by binding hemin, an iron chelatin siderophore that allows the bacteria to extract iron from the environment. This is Hemin receptor (hmuR) from Yersinia pestis.